A 67-amino-acid polypeptide reads, in one-letter code: Penaeidin-4c (67 aa).

Positions 1–19 (MRLVVCLVFLASFALVCQG) are cleaved as a signal peptide. Cystine bridges form between C42–C56, C45–C63, and C57–C64. Arginine amide is present on R66.

It belongs to the penaeidin family.

Its subcellular location is the cytoplasmic granule. Functionally, antibacterial and antifungal activity. Presents chitin-binding activity. The sequence is that of Penaeidin-4c from Penaeus vannamei (Whiteleg shrimp).